Here is a 297-residue protein sequence, read N- to C-terminus: Ribonuclease HIII (297 aa).

Residues 81-297 (IPIIGTDEVG…NTKKAQALLK (217 aa)) form the RNase H type-2 domain. The a divalent metal cation site is built by Asp-87, Glu-88, and Asp-192.

The protein belongs to the RNase HII family. RnhC subfamily. Mn(2+) serves as cofactor. Mg(2+) is required as a cofactor.

Its subcellular location is the cytoplasm. The enzyme catalyses Endonucleolytic cleavage to 5'-phosphomonoester.. Endonuclease that specifically degrades the RNA of RNA-DNA hybrids. In Streptococcus agalactiae serotype Ia (strain ATCC 27591 / A909 / CDC SS700), this protein is Ribonuclease HIII.